A 293-amino-acid polypeptide reads, in one-letter code: Ribosomal protein L11 methyltransferase (293 aa).

Residues T145, G166, D188, and N230 each coordinate S-adenosyl-L-methionine.

Belongs to the methyltransferase superfamily. PrmA family.

The protein resides in the cytoplasm. The enzyme catalyses L-lysyl-[protein] + 3 S-adenosyl-L-methionine = N(6),N(6),N(6)-trimethyl-L-lysyl-[protein] + 3 S-adenosyl-L-homocysteine + 3 H(+). Methylates ribosomal protein L11. In Mannheimia succiniciproducens (strain KCTC 0769BP / MBEL55E), this protein is Ribosomal protein L11 methyltransferase.